The following is a 275-amino-acid chain: Large ribosomal subunit protein uL2 (275 aa).

The interval 223 to 275 is disordered; sequence VAMNPIDHPHGGGEGRTGEAREPVSPWGTPSKGYKTRRNKRTNNMIVQRRKRK. The segment covering 229–244 has biased composition (basic and acidic residues); it reads DHPHGGGEGRTGEARE.

Belongs to the universal ribosomal protein uL2 family. In terms of assembly, part of the 50S ribosomal subunit. Forms a bridge to the 30S subunit in the 70S ribosome.

In terms of biological role, one of the primary rRNA binding proteins. Required for association of the 30S and 50S subunits to form the 70S ribosome, for tRNA binding and peptide bond formation. It has been suggested to have peptidyltransferase activity; this is somewhat controversial. Makes several contacts with the 16S rRNA in the 70S ribosome. The protein is Large ribosomal subunit protein uL2 of Bordetella avium (strain 197N).